Here is a 677-residue protein sequence, read N- to C-terminus: Threonine--tRNA ligase (677 aa).

The region spanning 1–59 (MAQATISITVNGEAKEVEATTTGVELFAEDKNIIAVKINGENRDLYTPLNDGDTVDPIA) is the TGS domain. A catalytic region spans residues 255-561 (DHRKLGAEMD…LLEHYAGAFP (307 aa)). Residues Cys360, His411, and His538 each contribute to the Zn(2+) site.

It belongs to the class-II aminoacyl-tRNA synthetase family. As to quaternary structure, homodimer. It depends on Zn(2+) as a cofactor.

It is found in the cytoplasm. It catalyses the reaction tRNA(Thr) + L-threonine + ATP = L-threonyl-tRNA(Thr) + AMP + diphosphate + H(+). Functionally, catalyzes the attachment of threonine to tRNA(Thr) in a two-step reaction: L-threonine is first activated by ATP to form Thr-AMP and then transferred to the acceptor end of tRNA(Thr). Also edits incorrectly charged L-seryl-tRNA(Thr). This is Threonine--tRNA ligase from Bifidobacterium longum (strain DJO10A).